Reading from the N-terminus, the 273-residue chain is Phosphonates import ATP-binding protein PhnC (273 aa).

The ABC transporter domain maps to 2–245 (LRIDKLTKRF…VAREIYGADA (244 aa)). 34-41 (GRSGAGKS) provides a ligand contact to ATP.

Belongs to the ABC transporter superfamily. Phosphonates importer (TC 3.A.1.9.1) family. The complex is composed of two ATP-binding proteins (PhnC), two transmembrane proteins (PhnE) and a solute-binding protein (PhnD).

The protein localises to the cell inner membrane. It carries out the reaction phosphonate(out) + ATP + H2O = phosphonate(in) + ADP + phosphate + H(+). In terms of biological role, part of the ABC transporter complex PhnCDE involved in phosphonates import. Responsible for energy coupling to the transport system. The protein is Phosphonates import ATP-binding protein PhnC of Ruegeria pomeroyi (strain ATCC 700808 / DSM 15171 / DSS-3) (Silicibacter pomeroyi).